We begin with the raw amino-acid sequence, 297 residues long: CASP-like protein 4A2 (297 aa).

The span at M1–P20 shows a compositional bias: polar residues. The segment at M1 to T135 is disordered. Over M1–T149 the chain is Cytoplasmic. Residues L69–P83 are compositionally biased toward pro residues. A helical transmembrane segment spans residues A150–A170. At D171 to L191 the chain is on the extracellular side. A helical transmembrane segment spans residues A192–I212. Residues A213 to D225 lie on the Cytoplasmic side of the membrane. A helical membrane pass occupies residues L226–A246. The Extracellular segment spans residues A247–M265. The helical transmembrane segment at A266–I286 threads the bilayer. Residues S287 to S297 lie on the Cytoplasmic side of the membrane.

It belongs to the Casparian strip membrane proteins (CASP) family. As to quaternary structure, homodimer and heterodimers.

It localises to the cell membrane. The chain is CASP-like protein 4A2 from Arabidopsis thaliana (Mouse-ear cress).